Reading from the N-terminus, the 122-residue chain is Putative protein adenylyltransferase MJ1547 (122 aa).

The short motif at 11-25 is the GSX(10)DXD motif element; it reads GSYAKNEYTKRSDID. 3 residues coordinate Mg(2+): Asp-23, Asp-25, and Asp-48.

This sequence belongs to the MntA antitoxin family. In terms of assembly, probably forms a complex with cognate toxin MJ1548. Requires Mg(2+) as cofactor.

The enzyme catalyses L-tyrosyl-[protein] + ATP = O-(5'-adenylyl)-L-tyrosyl-[protein] + diphosphate. The catalysed reaction is O-(5'-adenylyl)-L-tyrosyl-[protein] + ATP = O-[5'-(adenylyl-(5'-&gt;3')-adenylyl)]-L-tyrosyl-[protein] + diphosphate. Probable antitoxin component of a putative type VII toxin-antitoxin (TA) system. Neutralizes cognate toxic MJ1548 by di-AMPylation. This chain is Putative protein adenylyltransferase MJ1547, found in Methanocaldococcus jannaschii (strain ATCC 43067 / DSM 2661 / JAL-1 / JCM 10045 / NBRC 100440) (Methanococcus jannaschii).